Consider the following 190-residue polypeptide: CASP-like protein 1E2 (190 aa).

The tract at residues 1–21 (MEHEGKNNMNGMEMEKGKREL) is disordered. Topologically, residues 1-28 (MEHEGKNNMNGMEMEKGKRELGSRKGVE) are cytoplasmic. The chain crosses the membrane as a helical span at residues 29–49 (LTMRVLALILTMAAATVLGVA). Residues 50–83 (KQTKVVSIKLIPTLPPLDITTTAKASYLSAFVYN) lie on the Extracellular side of the membrane. Residues 84-104 (ISVNAIACGYTAISIAILMIS) traverse the membrane as a helical segment. The Cytoplasmic segment spans residues 105–111 (RGRRSKK). The chain crosses the membrane as a helical span at residues 112–132 (LLMVVLLGDLVMVALLFSGTG). Over 133–163 (AASAIGLMGLHGNKHVMWKKVCGVFGKFCHR) the chain is Extracellular. Residues 164–184 (AAPSLPLTLLAAVVFMFLVVL) form a helical membrane-spanning segment. Residues 185 to 190 (DAIKLP) are Cytoplasmic-facing.

It belongs to the Casparian strip membrane proteins (CASP) family. As to quaternary structure, homodimer and heterodimers.

It localises to the cell membrane. The chain is CASP-like protein 1E2 from Arabidopsis thaliana (Mouse-ear cress).